Here is a 386-residue protein sequence, read N- to C-terminus: NifS-like protein (386 aa).

Pyridoxal 5'-phosphate is bound by residues 58 to 59 and 184 to 186; these read SE and SIN.

It belongs to the class-V pyridoxal-phosphate-dependent aminotransferase family. NifS/IscS subfamily. Pyridoxal 5'-phosphate serves as cofactor.

The protein resides in the virion. The polypeptide is NifS-like protein (Ornithodoros (relapsing fever ticks)).